The primary structure comprises 493 residues: Glutamyl-tRNA(Gln) amidotransferase subunit A (493 aa).

Residues lysine 78 and serine 158 each act as charge relay system in the active site. Catalysis depends on serine 182, which acts as the Acyl-ester intermediate.

It belongs to the amidase family. GatA subfamily. Heterotrimer of A, B and C subunits.

The catalysed reaction is L-glutamyl-tRNA(Gln) + L-glutamine + ATP + H2O = L-glutaminyl-tRNA(Gln) + L-glutamate + ADP + phosphate + H(+). Its function is as follows. Allows the formation of correctly charged Gln-tRNA(Gln) through the transamidation of misacylated Glu-tRNA(Gln) in organisms which lack glutaminyl-tRNA synthetase. The reaction takes place in the presence of glutamine and ATP through an activated gamma-phospho-Glu-tRNA(Gln). In Rickettsia bellii (strain RML369-C), this protein is Glutamyl-tRNA(Gln) amidotransferase subunit A.